The following is a 368-amino-acid chain: Alanine racemase (368 aa).

The active-site Proton acceptor; specific for D-alanine is K40. K40 carries the N6-(pyridoxal phosphate)lysine modification. R134 lines the substrate pocket. Y263 acts as the Proton acceptor; specific for L-alanine in catalysis. M310 contributes to the substrate binding site.

This sequence belongs to the alanine racemase family. Requires pyridoxal 5'-phosphate as cofactor.

It carries out the reaction L-alanine = D-alanine. The protein operates within amino-acid biosynthesis; D-alanine biosynthesis; D-alanine from L-alanine: step 1/1. Catalyzes the interconversion of L-alanine and D-alanine. May also act on other amino acids. This is Alanine racemase (alr) from Listeria monocytogenes serotype 4a (strain HCC23).